Here is a 506-residue protein sequence, read N- to C-terminus: Glutamate--tRNA ligase (506 aa).

The short motif at 12-22 (PSPTGDPHVGT) is the 'HIGH' region element. Residues 253 to 257 (KLSKR) carry the 'KMSKS' region motif. An ATP-binding site is contributed by lysine 256.

It belongs to the class-I aminoacyl-tRNA synthetase family. Glutamate--tRNA ligase type 1 subfamily. As to quaternary structure, monomer.

Its subcellular location is the cytoplasm. It catalyses the reaction tRNA(Glu) + L-glutamate + ATP = L-glutamyl-tRNA(Glu) + AMP + diphosphate. Catalyzes the attachment of glutamate to tRNA(Glu) in a two-step reaction: glutamate is first activated by ATP to form Glu-AMP and then transferred to the acceptor end of tRNA(Glu). The polypeptide is Glutamate--tRNA ligase (Chlamydia muridarum (strain MoPn / Nigg)).